The primary structure comprises 934 residues: 2-oxoglutarate dehydrogenase E1 component (934 aa).

The protein belongs to the alpha-ketoglutarate dehydrogenase family. In terms of assembly, homodimer. Part of the 2-oxoglutarate dehydrogenase (OGDH) complex composed of E1 (2-oxoglutarate dehydrogenase), E2 (dihydrolipoamide succinyltransferase) and E3 (dihydrolipoamide dehydrogenase); the complex contains multiple copies of the three enzymatic components (E1, E2 and E3). Requires thiamine diphosphate as cofactor.

The catalysed reaction is N(6)-[(R)-lipoyl]-L-lysyl-[protein] + 2-oxoglutarate + H(+) = N(6)-[(R)-S(8)-succinyldihydrolipoyl]-L-lysyl-[protein] + CO2. Its function is as follows. E1 component of the 2-oxoglutarate dehydrogenase (OGDH) complex which catalyzes the decarboxylation of 2-oxoglutarate, the first step in the conversion of 2-oxoglutarate to succinyl-CoA and CO(2). This chain is 2-oxoglutarate dehydrogenase E1 component (sucA), found in Coxiella burnetii (strain RSA 493 / Nine Mile phase I).